The sequence spans 383 residues: Cysteine protease StiP (383 aa).

The protein belongs to the cysteine protease StiP family. Post-translationally, is probably processed via an autocatalytic removal of a proregion of about 100 amino acids.

Is inhibited by bromopyruvate in vitro. Activity is not affected by the presence of tellurite. Its function is as follows. Cysteine protease that may play a role in regulating cell morphology in response to stressful conditions which likely cause oxidative damage. Appears to catalyze its own cleavage, which probably leads to its activation. The sequence is that of Cysteine protease StiP (stiP) from Acinetobacter baylyi (strain ATCC 33305 / BD413 / ADP1).